The sequence spans 39 residues: Photosystem II reaction center protein L (39 aa).

Residues 18 to 38 (SLYLGLLLVFVTAVLFTSYFF) form a helical membrane-spanning segment.

Belongs to the PsbL family. PSII is composed of 1 copy each of membrane proteins PsbA, PsbB, PsbC, PsbD, PsbE, PsbF, PsbH, PsbI, PsbJ, PsbK, PsbL, PsbM, PsbT, PsbX, PsbY, Psb30/Ycf12, peripheral proteins PsbO, CyanoQ (PsbQ), PsbU, PsbV and a large number of cofactors. It forms dimeric complexes.

Its subcellular location is the cellular thylakoid membrane. Its function is as follows. One of the components of the core complex of photosystem II (PSII). PSII is a light-driven water:plastoquinone oxidoreductase that uses light energy to abstract electrons from H(2)O, generating O(2) and a proton gradient subsequently used for ATP formation. It consists of a core antenna complex that captures photons, and an electron transfer chain that converts photonic excitation into a charge separation. This subunit is found at the monomer-monomer interface and is required for correct PSII assembly and/or dimerization. In Prochlorococcus marinus (strain MIT 9313), this protein is Photosystem II reaction center protein L.